Here is a 467-residue protein sequence, read N- to C-terminus: Syntaxin-5 (467 aa).

Disordered stretches follow at residues methionine 1–valine 53 and glycine 58–threonine 77. The Cytoplasmic portion of the chain corresponds to methionine 1 to arginine 445. Residues threonine 10–threonine 22 show a composition bias toward low complexity. Positions glycine 29–valine 45 are enriched in gly residues. Over residues asparagine 68–threonine 77 the composition is skewed to polar residues. A coiled-coil region spans residues isoleucine 245–histidine 269. Residues glutamine 310 to alanine 335 form a disordered region. The t-SNARE coiled-coil homology domain occupies aspartate 375–tyrosine 437. A helical; Anchor for type IV membrane protein membrane pass occupies residues tryptophan 446–methionine 466. Residue serine 467 is a topological domain, vesicular.

Belongs to the syntaxin family. As to quaternary structure, homodimer.

It localises to the golgi apparatus. It is found in the cis-Golgi network membrane. In terms of biological role, mediates endoplasmic reticulum to Golgi transport. The sequence is that of Syntaxin-5 from Drosophila melanogaster (Fruit fly).